The primary structure comprises 466 residues: Ras GTPase-activating protein-binding protein 1 (466 aa).

Positions V11–Y133 constitute an NTF2 domain. Glycyl lysine isopeptide (Lys-Gly) (interchain with G-Cter in ubiquitin) cross-links involve residues K36, K50, K59, K64, K76, and K123. The acidic disordered region stretch occupies residues V142–E225. At T143 the chain carries Phosphothreonine. Disordered stretches follow at residues E144–T172 and E184–Q243. 2 stretches are compositionally biased toward acidic residues: residues P145–E157 and E185–P206. S149 carries the phosphoserine modification. Phosphoserine is present on residues S231, S232, S250, and S253. Residues T255–E329 are disordered. Composition is skewed to basic and acidic residues over residues P297–R307 and P318–E329. Residues H340–T415 enclose the RRM domain. Glycyl lysine isopeptide (Lys-Gly) (interchain with G-Cter in ubiquitin) cross-links involve residues K353 and K357. The residue at position 373 (S373) is a Phosphoserine. K376 participates in a covalent cross-link: Glycyl lysine isopeptide (Lys-Gly) (interchain with G-Cter in ubiquitin). An N6-acetyllysine; alternate modification is found at K376. A Glycyl lysine isopeptide (Lys-Gly) (interchain with G-Cter in SUMO2); alternate cross-link involves residue K376. A Glycyl lysine isopeptide (Lys-Gly) (interchain with G-Cter in ubiquitin); alternate cross-link involves residue K393. An RG-rich region region spans residues V410–Q466. Residues K413–L428 are compositionally biased toward basic and acidic residues. The interval K413 to Q466 is disordered. At R429 the chain carries Asymmetric dimethylarginine. Positions G430–R447 are enriched in gly residues. The residue at position 435 (R435) is an Asymmetric dimethylarginine; alternate. Omega-N-methylarginine; alternate is present on residues R435, R447, R460, and R465. R460 carries the dimethylated arginine; alternate modification.

As to quaternary structure, homodimer and oligomer. Component of a TAU mRNP complex, at least composed of IGF2BP1, ELAVL4 and G3BP1. Binds to the SH3 domain of Ras GTPase-activating protein (RASA1) in proliferating cells. No interaction in quiescent cells. Interacts (via NTF2 domain) with USP10; inhibiting stress granule formation by lowering G3BP1 valence. Interacts (via NTF2 domain) with CAPRIN1; promoting stress granule formation by lowering the saturation-concentration of G3BP1. Interacts (via NTF2 domain) with UBAP2L; promoting stress granule formation. Associates (via RG-rich region) with 40S ribosome subunits. Interacts with RPTOR and SPAG5; this complex is increased by oxidative stress. Interacts with ATXN2L. Interacts with STYXL1. Interacts with CGAS (via N-terminus); this interaction promotes the DNA-binding and activation of CGAS. Interacts (via C-terminus) with RIGI. Interacts with PABPC1. Interacts with QKI (isoforms QKI6 and QKI7); directing N(7)-methylguanine-containing mRNAs to stress granules. Requires Mg(2+) as cofactor. Phosphorylation of the acidic disordered region regulates stress granule assembly. RASA1-dependent phosphorylation of Ser-149 induces a conformational change that prevents self-association. Dephosphorylation after HRAS activation is required for stress granule assembly. Ser-149 phosphorylation induces partial nuclear localization. In terms of processing, arg-435 is dimethylated, probably to asymmetric dimethylarginine. Post-translationally, ubiquitinated by TRIM21 via 'Lys-63'-linked polyubiquitination in the NTF2 domain in response to heat shock, leading to stress granule disassembly: ubiquitination promotes interaction with the FAF2 adapter, followed by interaction with VCP, which extracts G3BP1 from stress granules, leading to stress granule disassembly. In case of prolonged stress, ubiquitination by TRIM21 leads to autophagy-dependent degradation of G3BP1 via recruitment of ubiquitinated G3BP1 by SQSTM1 and/or CALCOCO2 to autophagosomes.

The protein localises to the cytoplasm. The protein resides in the cytosol. Its subcellular location is the perikaryon. It is found in the stress granule. It localises to the nucleus. It catalyses the reaction ATP + H2O = ADP + phosphate + H(+). Under physiological conditions, G3BP1 adopts a compact state that is stabilized by intramolecular interactions between the RG-rich and the acidic regions that inhibit phase separation. Upon stress, polysomes disassemble and mRNAs are released in an unfolded protein-free state. Binding of unfolded mRNA to G3BP1 outcompetes the intramolecular interactions and RNA-bound G3BP1 adopts an expanded conformation in which the RG-rich region becomes exposed to engage in protein-protein and protein-RNA interactions, allowing physical cross-linking of RNA molecules to form protein-RNA condensates, leading to liquid-liquid phase separation (LLPS). Protein involved in various processes, such as stress granule formation and innate immunity. Plays an essential role in stress granule formation. Stress granules are membraneless compartments that store mRNAs and proteins, such as stalled translation pre-initiation complexes, in response to stress. Promotes formation of stress granules phase-separated membraneless compartment by undergoing liquid-liquid phase separation (LLPS) upon unfolded RNA-binding: functions as a molecular switch that triggers RNA-dependent LLPS in response to a rise in intracellular free RNA concentrations. Also acts as an ATP- and magnesium-dependent helicase: unwinds DNA/DNA, RNA/DNA, and RNA/RNA substrates with comparable efficiency. Acts unidirectionally by moving in the 5' to 3' direction along the bound single-stranded DNA. Unwinds preferentially partial DNA and RNA duplexes having a 17 bp annealed portion and either a hanging 3' tail or hanging tails at both 5'- and 3'-ends. Plays an essential role in innate immunity by promoting CGAS and RIGI activity. Participates in the DNA-triggered cGAS/STING pathway by promoting the DNA binding and activation of CGAS. Triggers the condensation of cGAS, a process probably linked to the formation of membrane-less organelles. Also enhances RIGI-induced type I interferon production probably by helping RIGI at sensing pathogenic RNA. May also act as a phosphorylation-dependent sequence-specific endoribonuclease in vitro: Cleaves exclusively between cytosine and adenine and cleaves MYC mRNA preferentially at the 3'-UTR. The polypeptide is Ras GTPase-activating protein-binding protein 1 (G3BP1) (Pongo abelii (Sumatran orangutan)).